A 186-amino-acid polypeptide reads, in one-letter code: Peptidyl-tRNA hydrolase (186 aa).

Tyrosine 14 is a tRNA binding site. Histidine 19 functions as the Proton acceptor in the catalytic mechanism. TRNA contacts are provided by tyrosine 64, asparagine 66, and asparagine 113.

This sequence belongs to the PTH family. In terms of assembly, monomer.

The protein resides in the cytoplasm. It catalyses the reaction an N-acyl-L-alpha-aminoacyl-tRNA + H2O = an N-acyl-L-amino acid + a tRNA + H(+). Hydrolyzes ribosome-free peptidyl-tRNAs (with 1 or more amino acids incorporated), which drop off the ribosome during protein synthesis, or as a result of ribosome stalling. Functionally, catalyzes the release of premature peptidyl moieties from peptidyl-tRNA molecules trapped in stalled 50S ribosomal subunits, and thus maintains levels of free tRNAs and 50S ribosomes. The sequence is that of Peptidyl-tRNA hydrolase from Agathobacter rectalis (strain ATCC 33656 / DSM 3377 / JCM 17463 / KCTC 5835 / VPI 0990) (Eubacterium rectale).